We begin with the raw amino-acid sequence, 707 residues long: GDNF-inducible zinc finger protein 1 (707 aa).

Residues 31-103 (CDVTVIVDYQ…VYTARVRVKE (73 aa)) form the BTB domain. The segment covering 149–165 (VEASSGPQVSVTPSSKA) has biased composition (polar residues). Disordered stretches follow at residues 149-221 (VEAS…PKIR) and 243-309 (RRLR…KDGE). Basic and acidic residues-rich tracts occupy residues 198-213 (PSKK…KDVA), 243-278 (RRLR…EPAS), and 287-298 (VEREESLQKVEG). 10 C2H2-type zinc fingers span residues 316–338 (FQCT…IKYH), 347–370 (YRCD…RHVH), 376–399 (FPCE…LQVH), 406–428 (HRCG…ERTH), 434–456 (YGCT…LRVH), 462–484 (FVCD…KRCH), 490–512 (FMCE…NRIH), 518–540 (FKCE…IKVH), 546–568 (YCCD…HRIH), and 574–596 (YMCN…TSIH). Position 612 is a phosphoserine (Ser612).

It belongs to the krueppel C2H2-type zinc-finger protein family. As to quaternary structure, interacts with NCL.

It localises to the cytoplasm. The protein resides in the nucleus. It is found in the nucleoplasm. The protein localises to the nucleolus. Functionally, transcriptional repressor that binds the GZF1 responsive element (GRE) (consensus: 5'-TGCGCN[TG][CA]TATA-3'). May be regulating VSX2/HOX10 expression. The sequence is that of GDNF-inducible zinc finger protein 1 (Gzf1) from Rattus norvegicus (Rat).